Consider the following 594-residue polypeptide: Protein HOTHEAD (594 aa).

A signal peptide spans 1-19 (MALKLFLFALLLCLPTSLS). FAD is bound at residue 64–91 (DYIVIGGGTAGCPLAATLSQNFSVLVLE). The active-site Proton acceptor is the His-529.

The protein belongs to the GMC oxidoreductase family. FAD is required as a cofactor. In terms of tissue distribution, expressed in roots, leaves, stems, inflorescences and siliques. Found not only in epidermis but also in all sub-epidermal cell layers.

In terms of biological role, probable FAD-dependent enzyme. Involved in regulating post-genital organ fusion. Required to limit cellular interactions between contacting epidermal cells during floral development. The chain is Protein HOTHEAD (HTH) from Arabidopsis thaliana (Mouse-ear cress).